A 1287-amino-acid chain; its full sequence is Vacuolating cytotoxin autotransporter (1287 aa).

Positions 1–33 (MEIQQTHRKINRPLVSLALVGALVSITPQQSHA) are cleaved as a signal peptide. Residues 326–381 (PPEGGYKDKPNNTPSQSGAKNDKQESSQNNSNTQVINPPNSTQKTEVQPTQVIDGP) form a disordered region. Residues 351 to 376 (SSQNNSNTQVINPPNSTQKTEVQPTQ) show a composition bias toward polar residues. Positions 1014–1287 (KYEKPTNVWA…ASNLGMRYSF (274 aa)) constitute an Autotransporter domain.

It is found in the periplasm. The protein localises to the secreted. The protein resides in the cell surface. Its subcellular location is the cell outer membrane. In terms of biological role, induces vacuolation of eukaryotic cells. Causes ulceration and gastric lesions. The sequence is that of Vacuolating cytotoxin autotransporter (vacA) from Helicobacter pylori (Campylobacter pylori).